Consider the following 328-residue polypeptide: D-cysteine desulfhydrase (328 aa).

Lys51 carries the post-translational modification N6-(pyridoxal phosphate)lysine.

This sequence belongs to the ACC deaminase/D-cysteine desulfhydrase family. Homodimer. Pyridoxal 5'-phosphate serves as cofactor.

The enzyme catalyses D-cysteine + H2O = hydrogen sulfide + pyruvate + NH4(+) + H(+). Functionally, catalyzes the alpha,beta-elimination reaction of D-cysteine and of several D-cysteine derivatives. It could be a defense mechanism against D-cysteine. The protein is D-cysteine desulfhydrase of Salmonella schwarzengrund (strain CVM19633).